We begin with the raw amino-acid sequence, 210 residues long: Small ribosomal subunit protein uS3 (210 aa).

One can recognise a KH type-2 domain in the interval 17–86 (IDEFLEKELR…NPQIDVQEIK (70 aa)).

This sequence belongs to the universal ribosomal protein uS3 family. Part of the 30S ribosomal subunit.

In terms of biological role, binds the lower part of the 30S subunit head. The chain is Small ribosomal subunit protein uS3 from Pyrococcus horikoshii (strain ATCC 700860 / DSM 12428 / JCM 9974 / NBRC 100139 / OT-3).